The sequence spans 202 residues: Transmembrane 4 L6 family member 4 (202 aa).

Residues 1-9 (MCTGGCARC) lie on the Cytoplasmic side of the membrane. The chain crosses the membrane as a helical span at residues 10–30 (LGGTLIPLAFFGFLANILLFF). The Extracellular portion of the chain corresponds to 31–45 (PGGKVIDDNDHLSQE). Residues 46 to 66 (IWFFGGILGSGVLMIFPALVF) traverse the membrane as a helical segment. At 67 to 93 (LGLKNNDCCGCCGNEGCGKRFAMFTST) the chain is on the cytoplasmic side. A helical membrane pass occupies residues 94–114 (IFAVVGFLGAGYSFIISAISI). Over 115-158 (NKGPKCLMANSTWGYPFHDGDYLNDEALWNKCREPLNVVPWNLT) the chain is Extracellular. 2 N-linked (GlcNAc...) asparagine glycosylation sites follow: asparagine 124 and asparagine 156. The chain crosses the membrane as a helical span at residues 159-179 (LFSILLVVGGIQMVLCAIQVV). The Cytoplasmic portion of the chain corresponds to 180-202 (NGLLGTLCGDCQCCGCCGGDGPV).

Belongs to the L6 tetraspanin family. N-glycosylated. Glycosylation is required for the growth inhibitory effect. As to expression, jejunum and liver.

It is found in the membrane. Functionally, regulates the adhesive and proliferative status of intestinal epithelial cells. Can mediate density-dependent cell proliferation. The chain is Transmembrane 4 L6 family member 4 (TM4SF4) from Homo sapiens (Human).